The chain runs to 148 residues: D-aminoacyl-tRNA deacylase (148 aa).

The Gly-cisPro motif, important for rejection of L-amino acids signature appears at 137–138 (GP).

It belongs to the DTD family. In terms of assembly, homodimer.

It localises to the cytoplasm. It catalyses the reaction glycyl-tRNA(Ala) + H2O = tRNA(Ala) + glycine + H(+). The catalysed reaction is a D-aminoacyl-tRNA + H2O = a tRNA + a D-alpha-amino acid + H(+). An aminoacyl-tRNA editing enzyme that deacylates mischarged D-aminoacyl-tRNAs. Also deacylates mischarged glycyl-tRNA(Ala), protecting cells against glycine mischarging by AlaRS. Acts via tRNA-based rather than protein-based catalysis; rejects L-amino acids rather than detecting D-amino acids in the active site. By recycling D-aminoacyl-tRNA to D-amino acids and free tRNA molecules, this enzyme counteracts the toxicity associated with the formation of D-aminoacyl-tRNA entities in vivo and helps enforce protein L-homochirality. This is D-aminoacyl-tRNA deacylase from Finegoldia magna (strain ATCC 29328 / DSM 20472 / WAL 2508) (Peptostreptococcus magnus).